The primary structure comprises 95 residues: Mammaglobin-B (95 aa).

A signal peptide spans 1–18; sequence MKLLMVLMLAALLLHCYA. Asn-68 carries N-linked (GlcNAc...) asparagine glycosylation.

Heterodimer of a lipophilin A and a lipophilin C (mammaglobin B) monomer associated head to head. In terms of tissue distribution, expressed in thymus, trachea, kidney, steroid responsive tissues (prostate, testis, uterus, breast and ovary) and salivary gland.

It is found in the secreted. May bind androgens and other steroids, may also bind estramustine, a chemotherapeutic agent used for prostate cancer. May be under transcriptional regulation of steroid hormones. The polypeptide is Mammaglobin-B (SCGB2A1) (Homo sapiens (Human)).